Consider the following 134-residue polypeptide: Endoribonuclease YbeY (134 aa).

Zn(2+)-binding residues include His94, His98, and His104.

It belongs to the endoribonuclease YbeY family. Requires Zn(2+) as cofactor.

The protein localises to the cytoplasm. Single strand-specific metallo-endoribonuclease involved in late-stage 70S ribosome quality control and in maturation of the 3' terminus of the 16S rRNA. The chain is Endoribonuclease YbeY from Campylobacter fetus subsp. fetus (strain 82-40).